We begin with the raw amino-acid sequence, 837 residues long: Protein translocase subunit SecA (837 aa).

ATP contacts are provided by residues glutamine 85, glycine 103–threonine 107, and aspartate 493. The Zn(2+) site is built by cysteine 821, cysteine 823, cysteine 832, and histidine 833.

It belongs to the SecA family. As to quaternary structure, monomer and homodimer. Part of the essential Sec protein translocation apparatus which comprises SecA, SecYEG and auxiliary proteins SecDF. Other proteins may also be involved. Zn(2+) is required as a cofactor.

It localises to the cell membrane. Its subcellular location is the cytoplasm. It carries out the reaction ATP + H2O + cellular proteinSide 1 = ADP + phosphate + cellular proteinSide 2.. In terms of biological role, part of the Sec protein translocase complex. Interacts with the SecYEG preprotein conducting channel. Has a central role in coupling the hydrolysis of ATP to the transfer of proteins into and across the cell membrane, serving as an ATP-driven molecular motor driving the stepwise translocation of polypeptide chains across the membrane. This Streptococcus pneumoniae serotype 19F (strain G54) protein is Protein translocase subunit SecA.